We begin with the raw amino-acid sequence, 579 residues long: Basic helix-loop-helix ARNT-like protein 2 (579 aa).

The interaction with PER2 stretch occupies residues M1–K198. The Nuclear localization signal signature appears at P4 to G9. Residues R40–R61 are disordered. In terms of domain architecture, bHLH spans G48–L101. Basic and acidic residues predominate over residues R50–R59. A Nuclear export signal 1 motif is present at residues I118 to L128. Residues Q119 to P190 form the PAS 1 domain. The segment covering C186 to D196 has biased composition (basic and acidic residues). The tract at residues C186–M213 is disordered. Residue K226 forms a Glycyl lysine isopeptide (Lys-Gly) (interchain with G-Cter in SUMO2 and SUMO3) linkage. A Glycyl lysine isopeptide (Lys-Gly) (interchain with G-Cter in SUMO2) cross-link involves residue K233. Residues V296–K366 form the PAS 2 domain. Positions L331 to L339 match the Nuclear export signal 2 motif. The PAC domain maps to T371–R414. Positions R469–D536 are disordered.

Component of the circadian core oscillator, which includes the CRY proteins, CLOCK, or NPAS2, BMAL1 or BMAL2, CSNK1D and/or CSNK1E, TIMELESS and the PER proteins. Interacts directly with CLOCK to form the BMAL2-CLOCK transactivator. Can form heterodimers or homodimers which interact directly with CLOCK to form the transcription activator. Interacts with NPAS2 and HIF1A. Interacts with PER2. As to expression, expressed in the suprachiasmatic nucleus (SCN).

Its subcellular location is the nucleus. Transcriptional activator which forms a core component of the circadian clock. The circadian clock, an internal time-keeping system, regulates various physiological processes through the generation of approximately 24 hour circadian rhythms in gene expression, which are translated into rhythms in metabolism and behavior. It is derived from the Latin roots 'circa' (about) and 'diem' (day) and acts as an important regulator of a wide array of physiological functions including metabolism, sleep, body temperature, blood pressure, endocrine, immune, cardiovascular, and renal function. Consists of two major components: the central clock, residing in the suprachiasmatic nucleus (SCN) of the brain, and the peripheral clocks that are present in nearly every tissue and organ system. Both the central and peripheral clocks can be reset by environmental cues, also known as Zeitgebers (German for 'timegivers'). The predominant Zeitgeber for the central clock is light, which is sensed by retina and signals directly to the SCN. The central clock entrains the peripheral clocks through neuronal and hormonal signals, body temperature and feeding-related cues, aligning all clocks with the external light/dark cycle. Circadian rhythms allow an organism to achieve temporal homeostasis with its environment at the molecular level by regulating gene expression to create a peak of protein expression once every 24 hours to control when a particular physiological process is most active with respect to the solar day. Transcription and translation of core clock components (CLOCK, NPAS2, BMAL1, BMAL2, PER1, PER2, PER3, CRY1 and CRY2) plays a critical role in rhythm generation, whereas delays imposed by post-translational modifications (PTMs) are important for determining the period (tau) of the rhythms (tau refers to the period of a rhythm and is the length, in time, of one complete cycle). A diurnal rhythm is synchronized with the day/night cycle, while the ultradian and infradian rhythms have a period shorter and longer than 24 hours, respectively. Disruptions in the circadian rhythms contribute to the pathology of cardiovascular diseases, cancer, metabolic syndromes and aging. A transcription/translation feedback loop (TTFL) forms the core of the molecular circadian clock mechanism. Transcription factors, CLOCK or NPAS2 and BMAL1 or BMAL2, form the positive limb of the feedback loop, act in the form of a heterodimer and activate the transcription of core clock genes and clock-controlled genes (involved in key metabolic processes), harboring E-box elements (5'-CACGTG-3') within their promoters. The core clock genes: PER1/2/3 and CRY1/2 which are transcriptional repressors form the negative limb of the feedback loop and interact with the CLOCK|NPAS2-BMAL1|BMAL2 heterodimer inhibiting its activity and thereby negatively regulating their own expression. This heterodimer also activates nuclear receptors NR1D1/2 and RORA/B/G, which form a second feedback loop and which activate and repress BMAL1 transcription, respectively. The CLOCK-BMAL2 heterodimer activates the transcription of SERPINE1/PAI1 and BHLHE40/DEC1. This is Basic helix-loop-helix ARNT-like protein 2 (Bmal2) from Mus musculus (Mouse).